The sequence spans 63 residues: Prokaryotic ubiquitin-like protein UBact (63 aa).

The interval 1 to 63 is disordered; it reads MSGRSTFGRF…SRRYRQRTGE (63 aa). The segment covering 17 to 50 has biased composition (basic and acidic residues); sequence PWERKPGDDEGGPKRPKVERPDTNDLLKRMRRVD. An Isoglutamyl lysine isopeptide (Glu-Lys) (interchain with K-? in acceptor proteins) cross-link involves residue Glu63.

This sequence belongs to the ubiquitin-like protein UBact family.

May function as a protein modifier covalently attached to lysine residues of substrate proteins. This may serve to target the modified proteins for degradation by proteasomes. The polypeptide is Prokaryotic ubiquitin-like protein UBact (Handelsmanbacteria sp. (strain RIFCSPLOWO2_12_FULL_64_10)).